Here is a 316-residue protein sequence, read N- to C-terminus: uncharacterized protein (316 aa).

The next 4 membrane-spanning stretches (helical) occupy residues 74–94 (IPVL…GMAI), 99–119 (WPYA…IFLG), 166–186 (MAGC…TVLG), and 188–208 (VEGF…GYIF).

Its subcellular location is the cell membrane. This is an uncharacterized protein from Synechocystis sp. (strain ATCC 27184 / PCC 6803 / Kazusa).